We begin with the raw amino-acid sequence, 472 residues long: Lycopene beta cyclase, chloroplastic (472 aa).

The N-terminal 25 residues, 1 to 25 (MDALLTSPFIPLKKPSHNRKSNTTT), are a transit peptide targeting the chloroplast. The disordered stretch occupies residues 1–27 (MDALLTSPFIPLKKPSHNRKSNTTTAS). Residue 62–90 (LAVVGGGPAGLAVAKRVSDAGLSVCSIDP) participates in NAD(+) binding.

This sequence belongs to the lycopene cyclase family. Expressed in flower buds and lips. Detected in roots and leaves.

The protein localises to the plastid. Its subcellular location is the chloroplast. The catalysed reaction is a carotenoid psi-end group = a carotenoid beta-end derivative. It functions in the pathway carotenoid biosynthesis; beta-carotene biosynthesis. It participates in carotenoid biosynthesis; beta-zeacarotene biosynthesis. Functionally, catalyzes the double cyclization reaction which converts lycopene to beta-carotene and neurosporene to beta-zeacarotene. This chain is Lycopene beta cyclase, chloroplastic (LCY-B), found in Oncidium hybrid cultivar (Orchid).